Reading from the N-terminus, the 334-residue chain is Nucleoid-associated protein PFL_1060 (334 aa).

It belongs to the YejK family.

It is found in the cytoplasm. The protein localises to the nucleoid. This Pseudomonas fluorescens (strain ATCC BAA-477 / NRRL B-23932 / Pf-5) protein is Nucleoid-associated protein PFL_1060.